The sequence spans 436 residues: GTPase Der (436 aa).

2 consecutive EngA-type G domains span residues 4–167 and 175–351; these read PVVA…PKDA and IKFS…DNHE. GTP-binding positions include 10–17, 57–61, 119–122, 181–188, 229–233, and 294–297; these read GRPNVGKS, DTGGI, NKVD, DTAGI, and NKWD. A KH-like domain is found at 352–436; it reads QRISSAVLND…PIHIIERRRK (85 aa).

It belongs to the TRAFAC class TrmE-Era-EngA-EngB-Septin-like GTPase superfamily. EngA (Der) GTPase family. As to quaternary structure, associates with the 50S ribosomal subunit.

In terms of biological role, GTPase that plays an essential role in the late steps of ribosome biogenesis. This is GTPase Der from Ligilactobacillus salivarius (strain UCC118) (Lactobacillus salivarius).